Here is a 695-residue protein sequence, read N- to C-terminus: Lasso peptide isopeptidase AtxE2 (695 aa).

The signal sequence occupies residues 1 to 30 (MRSSKIRCPGAIRVGTLVTAFGCLPHVAFA). 2 disulfide bridges follow: Cys296-Cys301 and Cys354-Cys363. Catalysis depends on Ser527, which acts as the Nucleophile. Cysteines 551 and 552 form a disulfide. Residues Glu610 and His638 each act as charge relay system in the active site.

It localises to the cytoplasm. Functionally, lasso peptide isopeptidase that specifically hydrolyzes Astexin-2 and Astexin-3, converting them to linear peptides. Has only a few specific contacts with substrates, because it recognizes Astexin knotted structure (principally the loop structure). Its binding to lasso peptides opens them to expose the isopeptide bonds for hydrolysis. The protein is Lasso peptide isopeptidase AtxE2 of Asticcacaulis excentricus (strain ATCC 15261 / DSM 4724 / KCTC 12464 / NCIMB 9791 / VKM B-1370 / CB 48).